The primary structure comprises 98 residues: NADH-ubiquinone oxidoreductase chain 4L (98 aa).

The next 3 helical transmembrane spans lie at 1-21 (MSMV…GLLM), 29-49 (SLLC…VAIL), and 61-81 (IILL…LVMV).

Belongs to the complex I subunit 4L family. In terms of assembly, core subunit of respiratory chain NADH dehydrogenase (Complex I) which is composed of 45 different subunits.

It is found in the mitochondrion inner membrane. The enzyme catalyses a ubiquinone + NADH + 5 H(+)(in) = a ubiquinol + NAD(+) + 4 H(+)(out). Its function is as follows. Core subunit of the mitochondrial membrane respiratory chain NADH dehydrogenase (Complex I) which catalyzes electron transfer from NADH through the respiratory chain, using ubiquinone as an electron acceptor. Part of the enzyme membrane arm which is embedded in the lipid bilayer and involved in proton translocation. This chain is NADH-ubiquinone oxidoreductase chain 4L (MT-ND4L), found in Felis catus (Cat).